The sequence spans 56 residues: Large ribosomal subunit protein bL33 (56 aa).

The span at 1–12 shows a compositional bias: basic and acidic residues; sequence MASKGGRDKIKL. The interval 1–30 is disordered; sequence MASKGGRDKIKLESTAGTGHFYTTTKNKRT. Polar residues predominate over residues 15–25; sequence TAGTGHFYTTT.

It belongs to the bacterial ribosomal protein bL33 family.

The polypeptide is Large ribosomal subunit protein bL33 (Ralstonia nicotianae (strain ATCC BAA-1114 / GMI1000) (Ralstonia solanacearum)).